The primary structure comprises 915 residues: DNA (cytosine-5)-methyltransferase 2 (915 aa).

The span at 1-14 (MAPSSPSSARPTRA) shows a compositional bias: low complexity. The disordered stretch occupies residues 1–171 (MAPSSPSSAR…STAANKPEED (171 aa)). The span at 15–30 (SGRERSAMAEEIHQNQ) shows a compositional bias: basic and acidic residues. The span at 42–57 (AKRRRKAASSGKKPKP) shows a compositional bias: basic residues. Over residues 71-80 (KKGETEKTEP) the composition is skewed to basic and acidic residues. Positions 81–108 (VVDDVCAEEPDEEELAMGEEEAEAEEQA) are enriched in acidic residues. Residues 109–119 (MQEVVAAVAAG) show a composition bias toward low complexity. A BAH domain is found at 188 to 313 (IVYCLGDDVY…VAYSTFANIS (126 aa)). Positions 315–328 (ENGQSGSETASGIS) are enriched in polar residues. Residues 315–338 (ENGQSGSETASGISSDDAGLETSS) form a disordered region. An SAM-dependent MTase C5-type domain is found at 345–876 (ATLLDLYSGC…YCLGQAYLGE (532 aa)). The region spanning 445 to 508 (FVVQKLIGIR…EGRKRKILPL (64 aa)) is the Chromo domain. Cysteine 521 is an active-site residue.

Belongs to the class I-like SAM-binding methyltransferase superfamily. C5-methyltransferase family.

It is found in the nucleus. The catalysed reaction is a 2'-deoxycytidine in DNA + S-adenosyl-L-methionine = a 5-methyl-2'-deoxycytidine in DNA + S-adenosyl-L-homocysteine + H(+). May be involved in the CpXpG methylation and in gene silencing. This chain is DNA (cytosine-5)-methyltransferase 2 (ZMET5), found in Zea mays (Maize).